Here is a 548-residue protein sequence, read N- to C-terminus: ATP synthase subunit alpha (548 aa).

Residue 172-179 (GDRKTGKT) coordinates ATP. A disordered region spans residues 511-548 (FETTSGESVVPDENVEAMSEDDVEKESVKVRKPAPKKK). The segment covering 523-534 (ENVEAMSEDDVE) has biased composition (acidic residues).

Belongs to the ATPase alpha/beta chains family. F-type ATPases have 2 components, CF(1) - the catalytic core - and CF(0) - the membrane proton channel. CF(1) has five subunits: alpha(3), beta(3), gamma(1), delta(1), epsilon(1). CF(0) has three main subunits: a(1), b(2) and c(9-12). The alpha and beta chains form an alternating ring which encloses part of the gamma chain. CF(1) is attached to CF(0) by a central stalk formed by the gamma and epsilon chains, while a peripheral stalk is formed by the delta and b chains.

The protein localises to the cell membrane. It carries out the reaction ATP + H2O + 4 H(+)(in) = ADP + phosphate + 5 H(+)(out). Functionally, produces ATP from ADP in the presence of a proton gradient across the membrane. The alpha chain is a regulatory subunit. The polypeptide is ATP synthase subunit alpha (Mycobacterium sp. (strain JLS)).